The chain runs to 461 residues: Fibrinogen C domain-containing protein 1 (461 aa).

A disordered region spans residues 1-24 (MVNDRWKTMGGAAQLEDRPRDKPQ). The Cytoplasmic portion of the chain corresponds to 1–33 (MVNDRWKTMGGAAQLEDRPRDKPQRPSCGYVLC). Residues 15 to 24 (LEDRPRDKPQ) are compositionally biased toward basic and acidic residues. A helical; Signal-anchor for type II membrane protein transmembrane segment spans residues 34-54 (TVLLALAVLLAVAVTGAVLFL). The Extracellular segment spans residues 55 to 461 (NHAHAPGTAP…MKIRPVREDR (407 aa)). The disordered stretch occupies residues 214–238 (GRPRNKADLQRAPARGTRPRGCATG). Residues 235–458 (CATGSRPRDC…FSEMKIRPVR (224 aa)) form the Fibrinogen C-terminal domain. Cys-244 and Cys-273 form a disulfide bridge. Asn-340 is a glycosylation site (N-linked (GlcNAc...) asparagine). Residues Asp-393 and Asp-395 each coordinate Ca(2+). Residues Cys-401 and Cys-414 are joined by a disulfide bond.

Homotetramer; disulfide-linked. Expressed in the small and large intestinal epithelial cells with a highly polarized localization to the apical surface corresponding to the brush border and in the ducts of the salivary gland.

The protein localises to the membrane. Functionally, acetyl group-binding receptor which shows a high-affinity and calcium-dependent binding to acetylated structures such as chitin, some N-acetylated carbohydrates, and amino acids, but not to their non-acetylated counterparts. Can facilitate the endocytosis of acetylated components. The chain is Fibrinogen C domain-containing protein 1 (FIBCD1) from Homo sapiens (Human).